The sequence spans 469 residues: Argininosuccinate lyase (469 aa).

Belongs to the lyase 1 family. Argininosuccinate lyase subfamily.

The protein resides in the cytoplasm. It carries out the reaction 2-(N(omega)-L-arginino)succinate = fumarate + L-arginine. Its pathway is amino-acid biosynthesis; L-arginine biosynthesis; L-arginine from L-ornithine and carbamoyl phosphate: step 3/3. This chain is Argininosuccinate lyase, found in Paracoccus denitrificans (strain Pd 1222).